The chain runs to 103 residues: Large ribosomal subunit protein uL24 (103 aa).

The protein belongs to the universal ribosomal protein uL24 family. Part of the 50S ribosomal subunit.

In terms of biological role, one of two assembly initiator proteins, it binds directly to the 5'-end of the 23S rRNA, where it nucleates assembly of the 50S subunit. Functionally, one of the proteins that surrounds the polypeptide exit tunnel on the outside of the subunit. This Oceanobacillus iheyensis (strain DSM 14371 / CIP 107618 / JCM 11309 / KCTC 3954 / HTE831) protein is Large ribosomal subunit protein uL24.